Here is a 72-residue protein sequence, read N- to C-terminus: Translation initiation factor IF-1 (72 aa).

The S1-like domain occupies 1-72 (MAKEESIKMN…SKGRITYRAR (72 aa)).

The protein belongs to the IF-1 family. In terms of assembly, component of the 30S ribosomal translation pre-initiation complex which assembles on the 30S ribosome in the order IF-2 and IF-3, IF-1 and N-formylmethionyl-tRNA(fMet); mRNA recruitment can occur at any time during PIC assembly.

Its subcellular location is the cytoplasm. One of the essential components for the initiation of protein synthesis. Stabilizes the binding of IF-2 and IF-3 on the 30S subunit to which N-formylmethionyl-tRNA(fMet) subsequently binds. Helps modulate mRNA selection, yielding the 30S pre-initiation complex (PIC). Upon addition of the 50S ribosomal subunit IF-1, IF-2 and IF-3 are released leaving the mature 70S translation initiation complex. This is Translation initiation factor IF-1 from Alkalilimnicola ehrlichii (strain ATCC BAA-1101 / DSM 17681 / MLHE-1).